Consider the following 301-residue polypeptide: Enolase-phosphatase E1 (301 aa).

Mg(2+) contacts are provided by aspartate 22 and glutamate 24. Residues serine 163–serine 164 and lysine 197 each bind substrate. Residue aspartate 222 participates in Mg(2+) binding. A disordered region spans residues alanine 273–phenylalanine 301.

This sequence belongs to the HAD-like hydrolase superfamily. MasA/MtnC family. As to quaternary structure, monomer. Mg(2+) serves as cofactor.

It is found in the cytoplasm. The protein localises to the nucleus. The catalysed reaction is 5-methylsulfanyl-2,3-dioxopentyl phosphate + H2O = 1,2-dihydroxy-5-(methylsulfanyl)pent-1-en-3-one + phosphate. Its pathway is amino-acid biosynthesis; L-methionine biosynthesis via salvage pathway; L-methionine from S-methyl-5-thio-alpha-D-ribose 1-phosphate: step 3/6. The protein operates within amino-acid biosynthesis; L-methionine biosynthesis via salvage pathway; L-methionine from S-methyl-5-thio-alpha-D-ribose 1-phosphate: step 4/6. Functionally, bifunctional enzyme that catalyzes the enolization of 2,3-diketo-5-methylthiopentyl-1-phosphate (DK-MTP-1-P) into the intermediate 2-hydroxy-3-keto-5-methylthiopentenyl-1-phosphate (HK-MTPenyl-1-P), which is then dephosphorylated to form the acireductone 1,2-dihydroxy-3-keto-5-methylthiopentene (DHK-MTPene). The polypeptide is Enolase-phosphatase E1 (Monosiga brevicollis (Choanoflagellate)).